The following is an 85-amino-acid chain: Large ribosomal subunit protein bL27 (85 aa).

The interval 1–22 (MAHKKAGGSTNNGRDSESKRLG) is disordered.

The protein belongs to the bacterial ribosomal protein bL27 family.

The polypeptide is Large ribosomal subunit protein bL27 (Vibrio atlanticus (strain LGP32) (Vibrio splendidus (strain Mel32))).